The chain runs to 253 residues: Phosphate import ATP-binding protein PstB (253 aa).

In terms of domain architecture, ABC transporter spans 5–248 (IQVRDLNAYY…PSDKRTEDYI (244 aa)). 37–44 (GPSGCGKS) lines the ATP pocket.

The protein belongs to the ABC transporter superfamily. Phosphate importer (TC 3.A.1.7) family. The complex is composed of two ATP-binding proteins (PstB), two transmembrane proteins (PstC and PstA) and a solute-binding protein (PstS).

The protein resides in the cell inner membrane. It catalyses the reaction phosphate(out) + ATP + H2O = ADP + 2 phosphate(in) + H(+). In terms of biological role, part of the ABC transporter complex PstSACB involved in phosphate import. Responsible for energy coupling to the transport system. In Koribacter versatilis (strain Ellin345), this protein is Phosphate import ATP-binding protein PstB.